The chain runs to 398 residues: MSGRVFLLLALVALASAIQRIKLEKRTYTREQYKFGSIQEHLKAKYVPGYIPNKDAFNEGLSDYSNAQYYGPVTIGTPPQNFQVLFDTGSSNLWVPCANCPFGDIACRMHNRFDCKKSSSCTATGASFEIQYGTGSMKGTVDNDVVCFGHDTTYCTDKNQGLACATSEPGITFVAAKFDGIFGMGWDTISVNKISQPMDQIFANSAICKNQLFAFWLSRDANDITNGGEITLCDTDPNHYVGNIAWEPLVSEDYWRIKLASVVIDGTTYTSGPIDSIVDTGTSLLTGPTDVIKKIQHKIGGIPLFNGEYEVECSKIPSLPNITFNLGGQNFDLQGKDYILQMSNGNGGSTCLSGFMGMDIPAPAGPLWILGDVFIGRFYSVFDHGNKRVGFATSRTGK.

Positions 1–17 (MSGRVFLLLALVALASA) are cleaved as a signal peptide. The propeptide at 18 to 55 (IQRIKLEKRTYTREQYKFGSIQEHLKAKYVPGYIPNKD) is removed in mature form. The region spanning 69 to 392 (YYGPVTIGTP…DHGNKRVGFA (324 aa)) is the Peptidase A1 domain. Aspartate 87 is a catalytic residue. Cysteines 100 and 107 form a disulfide. Aspartate 279 is an active-site residue. Cysteine 313 and cysteine 351 are disulfide-bonded. Residue asparagine 321 is glycosylated (N-linked (GlcNAc...) asparagine).

This sequence belongs to the peptidase A1 family. In terms of tissue distribution, highly expressed in intestine and to a lower extent in body wall muscles, hypodermis and neurons.

It is found in the cytoplasm. Its subcellular location is the lysosome. It localises to the secreted. Its function is as follows. Aspartic protease. Part of the necrosis cell death pathway. Involved in neuronal cell degeneration. Involved in heat stress response. This Caenorhabditis elegans protein is Aspartic protease 3.